The primary structure comprises 558 residues: Inositol-3-phosphate synthase (558 aa).

Positions 1 to 34 (MSPTALDACDHHDSFSLPAQDQSKVHPSARRTPE) are disordered. NAD(+) is bound by residues G99, G100, N101, N102, D174, S210, I211, Q221, R224, T262, A263, N264, T265, G313, S314, D338, S341, N372, N373, D374, K387, G439, D440, D468, and S469.

This sequence belongs to the myo-inositol 1-phosphate synthase family. In terms of assembly, homotetramer. NAD(+) serves as cofactor.

Its subcellular location is the cytoplasm. It catalyses the reaction D-glucose 6-phosphate = 1D-myo-inositol 3-phosphate. Its pathway is polyol metabolism; myo-inositol biosynthesis; myo-inositol from D-glucose 6-phosphate: step 1/2. Key enzyme in myo-inositol biosynthesis pathway that catalyzes the conversion of glucose 6-phosphate to 1-myo-inositol 1-phosphate in a NAD-dependent manner. Rate-limiting enzyme in the synthesis of all inositol-containing compounds. This chain is Inositol-3-phosphate synthase, found in Cryptococcus neoformans var. grubii serotype A (strain H99 / ATCC 208821 / CBS 10515 / FGSC 9487) (Filobasidiella neoformans var. grubii).